We begin with the raw amino-acid sequence, 100 residues long: MELTPRDKDKLLLFSAAQLAERRRARGLKLNYPEAVALISFEILEGARDGKSVAELMSAGREILTRDDVMEGVAEMVDEVQVEATFPDGTKLVTVHSPIV.

This sequence belongs to the urease gamma subunit family. In terms of assembly, heterotrimer of UreA (gamma), UreB (beta) and UreC (alpha) subunits. Three heterotrimers associate to form the active enzyme.

It is found in the cytoplasm. It carries out the reaction urea + 2 H2O + H(+) = hydrogencarbonate + 2 NH4(+). It participates in nitrogen metabolism; urea degradation; CO(2) and NH(3) from urea (urease route): step 1/1. The sequence is that of Urease subunit gamma from Chromohalobacter salexigens (strain ATCC BAA-138 / DSM 3043 / CIP 106854 / NCIMB 13768 / 1H11).